The primary structure comprises 287 residues: mRNA-capping enzyme small subunit (287 aa).

As to quaternary structure, heterodimer of a large and a small subunit.

Its subcellular location is the virion. It catalyses the reaction a 5'-end (5'-triphosphoguanosine)-ribonucleoside in mRNA + S-adenosyl-L-methionine = a 5'-end (N(7)-methyl 5'-triphosphoguanosine)-ribonucleoside in mRNA + S-adenosyl-L-homocysteine. Its function is as follows. Catalyzes the last reaction in the mRNA cap formation pathway. The sequence is that of mRNA-capping enzyme small subunit from Erythrocebus patas (Red guenon).